Here is an 860-residue protein sequence, read N- to C-terminus: MKLSWLEAAALTAASVVSADELAFSPPFYPSPWANGQGEWAEAYQRAVAIVSQMTLDEKVNLTTGTGWELEKCVGQTGGVPRLNIGGMCLQDSPLGIRDSDYNSAFPAGVNVAATWDKNLAYLRGQAMGQEFSDKGIDVQLGPAAGPLGRSPDGGRNWEGFSPDPALTGVLFAETIKGIQDAGVVATAKHYILNEQEHFRQVAEAAGYGFNISDTISSNVDDKTIHEMYLWPFADAVRAGVGAIMCSYNQINNSYGCQNSYTLNKLLKAELGFQGFVMSDWGAHHSGVGSALAGLDMSMPGDITFDSATSFWGTNLTIAVLNGTVPQWRVDDMAVRIMAAYYKVGRDRLYQPPNFSSWTRDEYGFKYFYPQEGPYEKVNHFVNVQRNHSEVIRKLGADSTVLLKNNNALPLTGKERKVAILGEDAGSNSYGANGCSDRGCDNGTLAMAWGSGTAEFPYLVTPEQAIQAEVLKHKGSVYAITDNWALSQVETLAKQASVSLVFVNSDAGEGYISVDGNEGDRNNLTLWKNGDNLIKAAANNCNNTIVVIHSVGPVLVDEWYDHPNVTAILWAGLPGQESGNSLADVLYGRVNPGAKSPFTWGKTREAYGDYLVRELNNGNGAPQDDFSEGVFIDYRGFDKRNETPIYEFGHGLSYTTFNYSGLHIQVLNASSNAQVATETGAAPTFGQVGNASDYVYPEGLTRISKFIYPWLNSTDLKASSGDPYYGVDTAEHVPEGATDGSPQPVLPAGGGSGGNPRLYDELIRVSVTVKNTGRVAGDAVPQLYVSLGGPNEPKVVLRKFDRLTLKPSEETVWTTTLTRRDLSNWDVAAQDWVITSYPKKVHVGSSSRQLPLHAALPKVQ.

A signal peptide spans 1 to 19; that stretch reads MKLSWLEAAALTAASVVSA. N-linked (GlcNAc...) asparagine glycans are attached at residues N61, N211, and N252. Residue D280 is part of the active site. N315, N322, N354, N387, N442, N523, N542, N564, N658, N668, N690, and N712 each carry an N-linked (GlcNAc...) asparagine glycan.

The protein belongs to the glycosyl hydrolase 3 family.

It carries out the reaction Hydrolysis of terminal, non-reducing beta-D-glucosyl residues with release of beta-D-glucose.. The protein operates within glycan metabolism; cellulose degradation. This Aspergillus aculeatus protein is Beta-glucosidase 1.